The chain runs to 300 residues: Folate-binding protein 1 (300 aa).

The signal sequence occupies residues 1–28; the sequence is MGRCLTKKVFLIQSPILFLHLLISLSSG. 5 disulfides stabilise this stretch: cysteine 38–cysteine 76, cysteine 68–cysteine 111, cysteine 77–cysteine 114, cysteine 102–cysteine 139, and cysteine 132–cysteine 178. Asparagine 173 carries N-linked (GlcNAc...) asparagine glycosylation. A helical transmembrane segment spans residues 238 to 258; sequence MTTIQKISLGMSFLIAGMFLI.

Belongs to the folate receptor family. As to expression, expressed in leaves.

The protein localises to the membrane. Its function is as follows. Folic acid-binding protein involved in salicylic acid- (SA-) induced folate accumulation by triggering uptake and accumulation of folic acid in cells. May be implicated in the transport of the folates from the site of production (leaves) to the site of storage (fruits and seeds) and utilization (roots). The chain is Folate-binding protein 1 from Arabidopsis thaliana (Mouse-ear cress).